We begin with the raw amino-acid sequence, 811 residues long: MEGVGAVRFWLVVCGCLAFPPRAESVCPERCDCQHPQHLLCTNRGLRAVPKTSSLPSPQDVLTYSLGGNFITNITAFDFHRLGQLRRLDLQYNQIRSLHPKTFEKLSRLEELYLGNNLLQALAPGTLAPLRKLRILYANGNEIGRLSRGSFEGLESLVKLRLDGNVLGALPDAVFAPLGNLLYLHLEANRIRFLGKNAFTQLGKLRFLNLSANELQPSLRHAATFVPLRSLSTLILSANSLQHLGPRVFQHLPRLGLLSLSGNQLTHLAPEAFWGLEALRELRLEGNRLNQLPLTLLEPLHSLEALDLSGNELSALHPATFGHQGRLRELSLRDNALSALSGDIFAASPALYRLDLDGNGWTCDCRLRGLKRWMGNWHSQGRLLTVFVQCRHPPALRGKYLDYLDDQLLQNGSCVDPSPSPTAGSRQWPISTAPGEGMTPPAGLAQELPLQPQPQPQQRGRLLPGVAWAGAAKELVGNRSALRLNRRGPGLQHQSPSAAAASGSAPQSLDLHEKPERGRPTRANLPQTEPTPTSEPASGTPSARDSWQRAAKQRLASEQQGRAVQYDSGVGLPPLVSDPCDFNKFILCNLTVEAVSANSASVRWAVREHRSPRPQGGARFRLLFDRFGQQPKFQRFVYLPERSDSATLHELRGDTPYLVCVEGVLGGRVCPVAPRDHCAGLVTLPEAGGRGGVDYQLLTLVLLAINALLVLLALAAWGSRWLRRKLRARRKGGAPVHVRHMYSTRRPLRSMGTGVSADFSGFQSHRPRTTVCALSEADLIEFPCDRFMDSSGGGTGGSLRREDHLLQRFAD.

The N-terminal stretch at 1–25 is a signal peptide; sequence MEGVGAVRFWLVVCGCLAFPPRAES. The LRRNT domain occupies 26–57; sequence VCPERCDCQHPQHLLCTNRGLRAVPKTSSLPS. At 26–696 the chain is on the extracellular side; that stretch reads VCPERCDCQH…AGGRGGVDYQ (671 aa). LRR repeat units follow at residues 61–81, 84–105, 108–129, 132–153, 156–177, 180–201, 204–223, 230–251, 254–275, 278–298, 302–323, and 326–347; these read VLTYSLGGNFITNITAFDFHR, QLRRLDLQYNQIRSLHPKTFEK, RLEELYLGNNLLQALAPGTLAP, KLRILYANGNEIGRLSRGSFEG, SLVKLRLDGNVLGALPDAVFAP, NLLYLHLEANRIRFLGKNAFTQ, KLRFLNLSANELQPSLRHAA, SLSTLILSANSLQHLGPRVFQH, RLGLLSLSGNQLTHLAPEAFWG, ALRELRLEGNRLNQLPLTLLE, SLEALDLSGNELSALHPATFGH, and RLRELSLRDNALSALSGDIFAA. N-linked (GlcNAc...) asparagine glycosylation is present at N73. Residues 359 to 416 form the LRRCT domain; the sequence is NGWTCDCRLRGLKRWMGNWHSQGRLLTVFVQCRHPPALRGKYLDYLDDQLLQNGSCVD. N-linked (GlcNAc...) asparagine glycosylation occurs at N411. Disordered regions lie at residues 414–460 and 486–562; these read CVDP…QQRG and RRGP…QQGR. Positions 421–430 are enriched in polar residues; that stretch reads PTAGSRQWPI. Low complexity-rich tracts occupy residues 440–460 and 494–508; these read PPAGLAQELPLQPQPQPQQRG and QSPSAAAASGSAPQS. Over residues 510–519 the composition is skewed to basic and acidic residues; the sequence is DLHEKPERGR. Positions 524–545 are enriched in polar residues; it reads NLPQTEPTPTSEPASGTPSARD. The N-linked (GlcNAc...) asparagine glycan is linked to N589. The helical transmembrane segment at 697–717 threads the bilayer; that stretch reads LLTLVLLAINALLVLLALAAW. Over 718–809 the chain is Cytoplasmic; it reads GSRWLRRKLR…RREDHLLQRF (92 aa). S798 is subject to Phosphoserine.

Belongs to the lipopolysaccharide (LPS) receptor, a multi-protein complex containing at least CD14, MD-2 and TLR4. Interacts with TLR4; this interaction is greatly enhanced following LPS stimulation. Interacts with LPS. Post-translationally, N-glycolysaled. Highly expressed in cortical astrocytes and in cerebellar granule neurons.

Its subcellular location is the membrane. Its function is as follows. Component of the TLR4 signaling complex. Mediates the innate immune response to bacterial lipopolysaccharide (LPS) leading to cytokine secretion and the inflammatory response. This is TLR4 interactor with leucine rich repeats (Tril) from Rattus norvegicus (Rat).